A 331-amino-acid polypeptide reads, in one-letter code: 6-phosphogluconolactonase (331 aa).

The residue at position 287 (K287) is an N6-acetyllysine.

The protein belongs to the cycloisomerase 2 family.

The enzyme catalyses 6-phospho-D-glucono-1,5-lactone + H2O = 6-phospho-D-gluconate + H(+). Its pathway is carbohydrate degradation; pentose phosphate pathway; D-ribulose 5-phosphate from D-glucose 6-phosphate (oxidative stage): step 2/3. Its function is as follows. Catalyzes the hydrolysis of 6-phosphogluconolactone to 6-phosphogluconate. This is 6-phosphogluconolactonase from Shigella flexneri.